A 133-amino-acid polypeptide reads, in one-letter code: Holo-[acyl-carrier-protein] synthase (133 aa).

Mg(2+)-binding residues include aspartate 8 and glutamate 57.

It belongs to the P-Pant transferase superfamily. AcpS family. It depends on Mg(2+) as a cofactor.

It localises to the cytoplasm. It carries out the reaction apo-[ACP] + CoA = holo-[ACP] + adenosine 3',5'-bisphosphate + H(+). Functionally, transfers the 4'-phosphopantetheine moiety from coenzyme A to a Ser of acyl-carrier-protein. In Caulobacter vibrioides (strain ATCC 19089 / CIP 103742 / CB 15) (Caulobacter crescentus), this protein is Holo-[acyl-carrier-protein] synthase.